Reading from the N-terminus, the 230-residue chain is Urease accessory protein UreF (230 aa).

It belongs to the UreF family. UreD, UreF and UreG form a complex that acts as a GTP-hydrolysis-dependent molecular chaperone, activating the urease apoprotein by helping to assemble the nickel containing metallocenter of UreC. The UreE protein probably delivers the nickel.

It localises to the cytoplasm. In terms of biological role, required for maturation of urease via the functional incorporation of the urease nickel metallocenter. In Cupriavidus pinatubonensis (strain JMP 134 / LMG 1197) (Cupriavidus necator (strain JMP 134)), this protein is Urease accessory protein UreF.